We begin with the raw amino-acid sequence, 236 residues long: Orotidine 5'-phosphate decarboxylase (236 aa).

Substrate contacts are provided by residues Asp-17, Lys-39, 66–75 (DLKFHDIPNT), Thr-125, Arg-186, Gln-195, Gly-215, and Arg-216. The active-site Proton donor is Lys-68.

This sequence belongs to the OMP decarboxylase family. Type 1 subfamily. As to quaternary structure, homodimer.

The enzyme catalyses orotidine 5'-phosphate + H(+) = UMP + CO2. Its pathway is pyrimidine metabolism; UMP biosynthesis via de novo pathway; UMP from orotate: step 2/2. Functionally, catalyzes the decarboxylation of orotidine 5'-monophosphate (OMP) to uridine 5'-monophosphate (UMP). This chain is Orotidine 5'-phosphate decarboxylase, found in Buchnera aphidicola subsp. Acyrthosiphon pisum (strain APS) (Acyrthosiphon pisum symbiotic bacterium).